The primary structure comprises 95 residues: MNNKLTALIFLGLLAIASCKWFNEKSIQNKIDEKIGKNFLGGMAKAVVHKLAKNEFMCVANVDMTKSCDTHCQKASGEKGYCHGTKCKCGVPLSY.

The signal sequence occupies residues 1–19 (MNNKLTALIFLGLLAIASC). Residues 55–95 (EFMCVANVDMTKSCDTHCQKASGEKGYCHGTKCKCGVPLSY) form the BetaSPN-type CS-alpha/beta domain. Disulfide bonds link cysteine 58-cysteine 82, cysteine 68-cysteine 87, and cysteine 72-cysteine 89.

The protein belongs to the long chain scorpion toxin family. Class 3 subfamily. In terms of tissue distribution, expressed by the venom gland.

It is found in the secreted. Its function is as follows. The short synthetic peptide (20-54) has antimicrobial activity against the yeasts F.culmorum (IC(50)=8.8 uM) and F.oxysporum (IC(50)=10 uM), and the Gram-negative bacteria E.coli. The chain is Opiscorpine-1 from Opistophthalmus carinatus (African yellow leg scorpion).